We begin with the raw amino-acid sequence, 362 residues long: Homeobox-leucine zipper protein HOX11 (362 aa).

Residues 27 to 45 (REEAAEAGRRDHEVRRELE) show a composition bias toward basic and acidic residues. Positions 27 to 179 (REEAAEAGRR…DDGGSARKKL (153 aa)) are disordered. The span at 64–75 (LTLLPMVPGLGL) shows a compositional bias: low complexity. Over residues 126–135 (LSSSPNNSAG) the composition is skewed to polar residues. Positions 145-160 (HGLGGNDAAPGGGGGD) are enriched in gly residues. Residues 174-233 (SARKKLRLSKEQSAFLEESFKEHSTLNPKQKLALAKQLNLRPRQVEVWFQNRRARTKLKQ) constitute a DNA-binding region (homeobox). The interval 232–276 (KQTEVDCEYLKRCCETLTEENRRLQKELAELRALKTVHPFYMHLP) is leucine-zipper. The segment at 301-330 (AATSSTAAPPAAPSSGGIAATSSSAAAAAA) is disordered.

This sequence belongs to the HD-ZIP homeobox family. Class II subfamily. In terms of tissue distribution, expressed in stems, leaf sheaths and blades and panicles.

It localises to the nucleus. Functionally, probable transcription factor. The sequence is that of Homeobox-leucine zipper protein HOX11 (HOX11) from Oryza sativa subsp. japonica (Rice).